The primary structure comprises 188 residues: Succinate-acetate/proton symporter SatP (188 aa).

At 1–13 the chain is on the cytoplasmic side; it reads MGNTKLANPAPLG. Residues 14–34 traverse the membrane as a helical segment; the sequence is LMGFGMTTILLNLHNVGYFAL. A topological domain (periplasmic) is located at residue Asp-35. The helical transmembrane segment at 36–56 threads the bilayer; sequence GIILAMGIFYGGIAQIFAGLL. Residues 57-63 are Cytoplasmic-facing; the sequence is EYKKGNT. A helical membrane pass occupies residues 64–84; the sequence is FGLTAFTSYGSFWLTLVAILL. The Periplasmic segment spans residues 85–97; sequence MPKLGLTDAPNAQ. The helical transmembrane segment at 98-118 threads the bilayer; it reads FLGVYLGLWGVFTLFMFFGTL. Residues 119-122 lie on the Cytoplasmic side of the membrane; sequence KGAR. The helical transmembrane segment at 123-143 threads the bilayer; it reads VLQFVFFSLTVLFALLAIGNI. Topologically, residues 144–148 are periplasmic; the sequence is AGNAA. The chain crosses the membrane as a helical span at residues 149-169; sequence IIHFAGWIGLICGASAIYLAM. Residues 170-188 lie on the Cytoplasmic side of the membrane; it reads GEVLNEQFGRTVLPIGESH.

Belongs to the acetate uptake transporter (AceTr) (TC 2.A.96) family.

The protein localises to the cell inner membrane. Functionally, uptake of acetate and succinate. Transport is energetically dependent on the protonmotive force. The chain is Succinate-acetate/proton symporter SatP (satP) from Escherichia coli O157:H7.